A 253-amino-acid polypeptide reads, in one-letter code: Imidazole glycerol phosphate synthase subunit HisF (253 aa).

Catalysis depends on residues aspartate 11 and aspartate 130.

This sequence belongs to the HisA/HisF family. Heterodimer of HisH and HisF.

Its subcellular location is the cytoplasm. The enzyme catalyses 5-[(5-phospho-1-deoxy-D-ribulos-1-ylimino)methylamino]-1-(5-phospho-beta-D-ribosyl)imidazole-4-carboxamide + L-glutamine = D-erythro-1-(imidazol-4-yl)glycerol 3-phosphate + 5-amino-1-(5-phospho-beta-D-ribosyl)imidazole-4-carboxamide + L-glutamate + H(+). Its pathway is amino-acid biosynthesis; L-histidine biosynthesis; L-histidine from 5-phospho-alpha-D-ribose 1-diphosphate: step 5/9. IGPS catalyzes the conversion of PRFAR and glutamine to IGP, AICAR and glutamate. The HisF subunit catalyzes the cyclization activity that produces IGP and AICAR from PRFAR using the ammonia provided by the HisH subunit. The sequence is that of Imidazole glycerol phosphate synthase subunit HisF from Geotalea uraniireducens (strain Rf4) (Geobacter uraniireducens).